The sequence spans 237 residues: Casparian strip membrane protein 2 (237 aa).

A disordered region spans residues 1 to 48 (MSGSDTSGSVHVDEHGHGHGKASSSYDGAGAPAPAPAPFQGHRKAGSG). Residues 1–69 (MSGSDTSGSV…GSGGDGLRRC (69 aa)) are Cytoplasmic-facing. A helical transmembrane segment spans residues 70–90 (LGLIDFVLRVAAFGPTLAAAI). The Extracellular segment spans residues 91–117 (SIGTSDERLSVFTNYFQFRARFDDFPA). Residues 118 to 138 (FEFFIVANAIAAGYMVLSLPF) form a helical membrane-spanning segment. The Cytoplasmic portion of the chain corresponds to 139–152 (SAATIMSSKATGVK). The helical transmembrane segment at 153–173 (LLLLICDTIMVGLLTAAASAA) threads the bilayer. Topologically, residues 174-205 (AAMVYVAHEGNLRANWVPICLQFHGFCQRTSG) are extracellular. Residues 206-226 (AVIASFLAVFVLMVLIVMAAF) form a helical membrane-spanning segment. Over 227–237 (TMPRRTHHTAS) the chain is Cytoplasmic.

Belongs to the Casparian strip membrane proteins (CASP) family. Homodimer and heterodimers.

It is found in the cell membrane. Regulates membrane-cell wall junctions and localized cell wall deposition. Required for establishment of the Casparian strip membrane domain (CSD) and the subsequent formation of Casparian strips, a cell wall modification of the root endodermis that determines an apoplastic barrier between the intraorganismal apoplasm and the extraorganismal apoplasm and prevents lateral diffusion. In Oryza sativa subsp. japonica (Rice), this protein is Casparian strip membrane protein 2.